A 263-amino-acid polypeptide reads, in one-letter code: MSLHPVILLVLVLCLGWKINTQEGSLPDITIFPNSSLMISQGTFVTVVCSYSDKHDLYNMVRLEKDGSTFMEKSTEPYKTEDEFEIGPVNETITGHYSCIYSKGITWSERSKTLELKVIKENVIQTPAPGPTSDTSWLKTYSIYIFTVVSVIFLLCLSALLFCFLRHRQKKQGLPNNKRQQQRPEERLNLATNGLEMTPDIVADDRLPEDRWTETWTPVAGDLQEVTYIQLDHHSLTQRAVGAVTSQSTDMAESSTYAAIIRH.

Residues 1–21 form the signal peptide; the sequence is MSLHPVILLVLVLCLGWKINT. Residues 22-144 are Extracellular-facing; sequence QEGSLPDITI…TSWLKTYSIY (123 aa). Residues 27–115 enclose the Ig-like C2-type domain; that stretch reads PDITIFPNSS…TWSERSKTLE (89 aa). N-linked (GlcNAc...) asparagine glycans are attached at residues N34 and N90. An intrachain disulfide couples C49 to C99. A helical membrane pass occupies residues 145-165; sequence IFTVVSVIFLLCLSALLFCFL. Over 166-263 the chain is Cytoplasmic; sequence RHRQKKQGLP…SSTYAAIIRH (98 aa). 2 short sequence motifs (ITIM motif) span residues 226–231 and 255–260; these read VTYIQL and STYAAI. 2 positions are modified to phosphotyrosine: Y228 and Y257.

In terms of assembly, interacts with SH2 domains of tyrosine-protein phosphatases PTPN6 and PTPN11. The interaction with PTPN6 is constitutive. Interacts with the SH2 domain of CSK. Binds with high affinity to extracellular matrix collagens, the interaction is functionally important. Post-translationally, phosphorylation at Tyr-228 and Tyr-257 activates it. May be phosphorylated by LCK. In terms of processing, N-glycosylated. As to expression, expressed in lymphoid organs and in cell lines of hemopoietic origin.

It is found in the cell membrane. Its function is as follows. Functions as an inhibitory receptor that plays a constitutive negative regulatory role on cytolytic function of natural killer (NK) cells, B-cells and T-cells. Activation by Tyr phosphorylation results in recruitment and activation of the phosphatases PTPN6 and PTPN11. It also reduces the increase of intracellular calcium evoked by B-cell receptor ligation. May also play its inhibitory role independently of SH2-containing phosphatases. Modulates cytokine production in CD4+ T-cells, down-regulating IL2 and IFNG production while inducing secretion of transforming growth factor beta. Also down-regulates IgG and IgE production in B-cells as well as IL8, IL10 and TNF secretion. Inhibits proliferation and induces apoptosis in myeloid leukemia cell lines as well as prevents nuclear translocation of NF-kappa-B p65 subunit/RELA and phosphorylation of I-kappa-B alpha/CHUK in these cells. Inhibits the differentiation of peripheral blood precursors towards dendritic cells. This chain is Leukocyte-associated immunoglobulin-like receptor 1 (Lair1), found in Mus musculus (Mouse).